A 388-amino-acid polypeptide reads, in one-letter code: Tryptophan synthase beta chain 1 (388 aa).

Residue Lys-82 is modified to N6-(pyridoxal phosphate)lysine.

Belongs to the TrpB family. In terms of assembly, tetramer of two alpha and two beta chains. It depends on pyridoxal 5'-phosphate as a cofactor.

The enzyme catalyses (1S,2R)-1-C-(indol-3-yl)glycerol 3-phosphate + L-serine = D-glyceraldehyde 3-phosphate + L-tryptophan + H2O. It participates in amino-acid biosynthesis; L-tryptophan biosynthesis; L-tryptophan from chorismate: step 5/5. The beta subunit is responsible for the synthesis of L-tryptophan from indole and L-serine. The polypeptide is Tryptophan synthase beta chain 1 (trpB1) (Pyrococcus abyssi (strain GE5 / Orsay)).